Consider the following 149-residue polypeptide: Lipoprotein MlpF (149 aa).

The N-terminal stretch at 1–17 (MKIINILFCLFLLLLNS) is a signal peptide. C18 is lipidated: N-palmitoyl cysteine. C18 carries S-diacylglycerol cysteine lipidation. Residues 26-58 (LKNNAQQTKSRGKRDLTQKEATPEKPKSKEELL) are disordered. Residues 38-58 (KRDLTQKEATPEKPKSKEELL) show a composition bias toward basic and acidic residues.

Belongs to the Multicopy lipoprotein (Mlp) family.

It is found in the cell outer membrane. In terms of biological role, an outer membrane protein that may participate in pathogenesis. Some human Lyme disease patients have antibodies against this protein. The Mlp proteins probably undergo intragenic recombination, generating new alleles. The protein is Lipoprotein MlpF of Borreliella burgdorferi (strain ATCC 35210 / DSM 4680 / CIP 102532 / B31) (Borrelia burgdorferi).